Here is a 460-residue protein sequence, read N- to C-terminus: tRNA(Ile)-lysidine synthase (460 aa).

30-35 (SGGLDS) lines the ATP pocket.

The protein belongs to the tRNA(Ile)-lysidine synthase family.

Its subcellular location is the cytoplasm. It catalyses the reaction cytidine(34) in tRNA(Ile2) + L-lysine + ATP = lysidine(34) in tRNA(Ile2) + AMP + diphosphate + H(+). Functionally, ligates lysine onto the cytidine present at position 34 of the AUA codon-specific tRNA(Ile) that contains the anticodon CAU, in an ATP-dependent manner. Cytidine is converted to lysidine, thus changing the amino acid specificity of the tRNA from methionine to isoleucine. This is tRNA(Ile)-lysidine synthase from Yersinia pseudotuberculosis serotype I (strain IP32953).